The chain runs to 236 residues: MTRRYWNINLEEMMEAGVHFGHGTRKWNPKMAPYISAKRKGIHITNLTRTARFLSEACDLVFDAASRGKQFLIVGTKNKEADSVAWAAIRARCHYVNKKWLGGMLTNWSTTETRLHKFRDLRTEQKTGGLDRLPKRDAAMLKRQLSHLQTYLGGIKYMTGLPDIVIIVDQHEEYTALQECITLGIPTICLIDTNCDPDLADISIPANDDAISSIRLILNKLVFAICEGRSGYIRNP.

This sequence belongs to the universal ribosomal protein uS2 family.

It localises to the plastid. The protein localises to the chloroplast. The chain is Small ribosomal subunit protein uS2c (rps2) from Lactuca sativa (Garden lettuce).